The primary structure comprises 397 residues: MDSVNNLCRHYEEKVRPCIDLIDTLRALGVEQDLALPAIAVIGDQSSGKSSVLEALSGVALPRGSGIVTRCPLVLKLRKLKEGEEWRGKVSYDDIEVELSDPSEVEEAINKGQNFIAGVGLGISDKLISLDVSSPNVPDLTLIDLPGITRVAVGNQPADIGRQIKRLIKTYIQKQETINLVVVPSNVDIATTEALSMAQEVDPEGDRTIEMVQTAFVKILSNDFGDFLNLCCTAKSKIKEIRLNQEKEAENLIRLHFQMEQIVYCQDQVYKETLKTIREKEAEKEKTKALINPATFQNNSQFPQKGLTTTEMTQHLKAYYQECRRNIGRQIPLIIQYFILKTFGEEIEKTMLQLLQDTSKCSWFLEEQSDTREKKKFLKRRLLRLDEARQKLAKFSD.

Belongs to the TRAFAC class dynamin-like GTPase superfamily. Dynamin/Fzo/YdjA family.

This Mus musculus (Mouse) protein is Protein Mx1 (Mx1).